A 544-amino-acid polypeptide reads, in one-letter code: Probable protein kinase UbiB (544 aa).

A Protein kinase domain is found at 123–505 (EFDEQALASA…GRQKSHNVRS (383 aa)). Residues 129-137 (LASASIAQV) and Lys-156 each bind ATP. The active-site Proton acceptor is Asp-291. Residues 522 to 540 (LPLWLSCGTLVTVLLVLLL) form a helical membrane-spanning segment.

The protein belongs to the ABC1 family. UbiB subfamily.

It is found in the cell inner membrane. The protein operates within cofactor biosynthesis; ubiquinone biosynthesis [regulation]. Its function is as follows. Is probably a protein kinase regulator of UbiI activity which is involved in aerobic coenzyme Q (ubiquinone) biosynthesis. The polypeptide is Probable protein kinase UbiB (Actinobacillus pleuropneumoniae serotype 7 (strain AP76)).